The following is a 582-amino-acid chain: Inositol transporter 4 (582 aa).

12 consecutive transmembrane segments (helical) span residues 35–55 (GIGG…LLFI), 70–90 (STIV…GGWI), 105–125 (VLFL…VIIV), 128–148 (IFVG…ISEA), 162–182 (GLLI…FVHT), 188–208 (WMLG…LSLP), 290–310 (FVGI…AGYA), 317–337 (ALSL…MMFV), 345–365 (LMII…TVFS), 456–476 (FGFL…PGMG), 494–514 (LGGG…SESF), and 525–545 (GTFL…WLLV).

It belongs to the major facilitator superfamily. Sugar transporter (TC 2.A.1.1) family. As to expression, highly expressed in pollen and phloem companion cells.

The protein resides in the cell membrane. In terms of biological role, plasma membrane inositol-proton symporter. Mediates high-affinity myoinositol-proton symport across the plasma membrane. Active with myoinositol, scylloinositol and D-chiroinositol. Low activity with mucoinositol and alloinositol. In Arabidopsis thaliana (Mouse-ear cress), this protein is Inositol transporter 4 (INT4).